The following is a 301-amino-acid chain: Mitochondrial import receptor subunit TOM40 homolog (301 aa).

The interval 1-20 (MATPTESEFAAPIPQTNPGS) is disordered.

It belongs to the Tom40 family. In terms of assembly, forms part of the preprotein translocase complex of the outer mitochondrial membrane (TOM complex). Interacts with mitochondrial targeting sequences.

The protein localises to the mitochondrion outer membrane. Its function is as follows. Channel-forming protein essential for import of protein precursors into mitochondria. Specifically required for nnt-1 accumulation in the mitochondria and may be involved in the secretion of daf-28/insulin from the mitochondria. Required for embryonic and larval development. The chain is Mitochondrial import receptor subunit TOM40 homolog from Caenorhabditis briggsae.